The sequence spans 311 residues: Large ribosomal subunit protein uL22 (311 aa).

Belongs to the universal ribosomal protein uL22 family. As to quaternary structure, part of the 50S ribosomal subunit.

This protein binds specifically to 23S rRNA; its binding is stimulated by other ribosomal proteins, e.g. L4, L17, and L20. It is important during the early stages of 50S assembly. It makes multiple contacts with different domains of the 23S rRNA in the assembled 50S subunit and ribosome. In terms of biological role, the globular domain of the protein is located near the polypeptide exit tunnel on the outside of the subunit, while an extended beta-hairpin is found that lines the wall of the exit tunnel in the center of the 70S ribosome. This is Large ribosomal subunit protein uL22 (rplV) from Ureaplasma parvum serovar 3 (strain ATCC 27815 / 27 / NCTC 11736).